The primary structure comprises 681 residues: Peroxisomal acyl-coenzyme A oxidase 2 (681 aa).

Phosphoserine is present on serine 9. N6-succinyllysine occurs at positions 66, 137, 453, 561, and 667. A Microbody targeting signal motif is present at residues 679 to 681 (SNL).

Belongs to the acyl-CoA oxidase family. In terms of assembly, homodimer. It depends on FAD as a cofactor. In terms of tissue distribution, liver and kidney.

It is found in the peroxisome. The catalysed reaction is (25R)-3alpha,7alpha,12alpha-trihydroxy-5beta-cholestan-26-oyl-CoA + A + H2O = (24R,25R)-3alpha,7alpha,12alpha,24-tetrahydroxy-5beta-cholestan-26-oyl-CoA + AH2. It catalyses the reaction (25S)-3alpha,7alpha,12alpha-trihydroxy-5beta-cholestan-26-oyl-CoA + O2 = (24E)-3alpha,7alpha,12alpha-trihydroxy-5beta-cholest-24-en-26-oyl-CoA + H2O2. In terms of biological role, oxidizes the CoA esters of the bile acid intermediates di- and tri-hydroxycholestanoic acids. Capable of oxidizing short as well as long chain 2-methyl branched fatty acids. The chain is Peroxisomal acyl-coenzyme A oxidase 2 from Oryctolagus cuniculus (Rabbit).